Consider the following 76-residue polypeptide: Frizzled-3 (76 aa).

At 1–5 the chain is on the cytoplasmic side; that stretch reads YPERP. Residues 6 to 26 form a helical membrane-spanning segment; the sequence is IIFYAVCYMMVSLIFFIGFLL. Topologically, residues 27–54 are extracellular; that stretch reads EDRVACNASSPAQYKASTVTQGSHNKAC. A glycan (N-linked (GlcNAc...) asparagine) is linked at Asn-33. The helical transmembrane segment at 55–75 threads the bilayer; the sequence is TMLFMVLYFFTMAGSVWWVIL. Residue Arg-76 is a topological domain, cytoplasmic.

This sequence belongs to the G-protein coupled receptor Fz/Smo family.

The protein resides in the membrane. Its subcellular location is the cell membrane. The protein localises to the cell surface. It localises to the apical cell membrane. Receptor for Wnt proteins. Most of frizzled receptors are coupled to the beta-catenin canonical signaling pathway, which leads to the activation of disheveled proteins, inhibition of GSK-3 kinase, nuclear accumulation of beta-catenin and activation of Wnt target genes. A second signaling pathway involving PKC and calcium fluxes has been seen for some family members, but it is not yet clear if it represents a distinct pathway or if it can be integrated in the canonical pathway, as PKC seems to be required for Wnt-mediated inactivation of GSK-3 kinase. Both pathways seem to involve interactions with G-proteins. May be involved in transduction and intercellular transmission of polarity information during tissue morphogenesis and/or in differentiated tissues. Plays a role in controlling early axon growth and guidance processes necessary for the formation of a subset of central and peripheral major fiber tracts. Involved in the migration of cranial neural crest cells. May also be implicated in the transmission of sensory information from the trunk and limbs to the brain. Controls commissural sensory axons guidance after midline crossing along the anterior-posterior axis in the developing spinal cord in a Wnt-dependent signaling pathway. Together with FZD6, is involved in the neural tube closure and plays a role in the regulation of the establishment of planar cell polarity (PCP). Promotes neurogenesis by maintaining sympathetic neuroblasts within the cell cycle in a beta-catenin-dependent manner. This Gallus gallus (Chicken) protein is Frizzled-3 (FZD3).